A 170-amino-acid polypeptide reads, in one-letter code: Co-chaperone protein HscB homolog (170 aa).

The 75-residue stretch at 5–79 (DHFSLFGLPA…RARYLCEQAG (75 aa)) folds into the J domain.

This sequence belongs to the HscB family. Interacts with HscA and stimulates its ATPase activity.

In terms of biological role, co-chaperone involved in the maturation of iron-sulfur cluster-containing proteins. Seems to help targeting proteins to be folded toward HscA. The chain is Co-chaperone protein HscB homolog from Bordetella petrii (strain ATCC BAA-461 / DSM 12804 / CCUG 43448).